A 98-amino-acid chain; its full sequence is Large ribosomal subunit protein uL23 (98 aa).

The protein belongs to the universal ribosomal protein uL23 family. As to quaternary structure, part of the 50S ribosomal subunit. Contacts protein L29, and trigger factor when it is bound to the ribosome.

Its function is as follows. One of the early assembly proteins it binds 23S rRNA. One of the proteins that surrounds the polypeptide exit tunnel on the outside of the ribosome. Forms the main docking site for trigger factor binding to the ribosome. This is Large ribosomal subunit protein uL23 from Koribacter versatilis (strain Ellin345).